Reading from the N-terminus, the 366-residue chain is Polyprenyl transferase ausN (366 aa).

8 helical membrane passes run 97–117 (VVGIAYSAATAPTKLPLDLLL), 121–141 (LLLTLWSFILRSAGCAWNDLI), 164–184 (LPTATIFTACLFALGCSLFLF), 215–235 (LILVNIAWAIPMAMHSLGVEP), 239–259 (ILSSICLCVFIATVIVLIDLV), 287–307 (LAYSLFAISTLALLFGGLLGG), 308–328 (LRAPFVVFSVGGHIVGFWTFL), and 346–366 (SCLMASIFWLLGLGIEYAVRV).

The protein belongs to the UbiA prenyltransferase family. The cofactor is Mg(2+).

Its subcellular location is the membrane. It catalyses the reaction 3,5-dimethylorsellinate + (2E,6E)-farnesyl diphosphate = (3R)-3-farnesyl-6-hydroxy-2,3,5-trimethyl-4-oxocyclohexa-1,5-diene-1-carboxylate + diphosphate + H(+). Its pathway is secondary metabolite biosynthesis; terpenoid biosynthesis. Its function is as follows. Polyprenyl transferase; part of the gene cluster that mediates the biosynthesis of calidodehydroaustin, a fungal meroterpenoid. The first step of the pathway is the synthesis of 3,5-dimethylorsellinic acid by the polyketide synthase ausA. 3,5-dimethylorsellinic acid is then prenylated by the polyprenyl transferase ausN. Further epoxidation by the FAD-dependent monooxygenase ausM and cyclization by the probable terpene cyclase ausL lead to the formation of protoaustinoid A. Protoaustinoid A is then oxidized to spiro-lactone preaustinoid A3 by the combined action of the FAD-binding monooxygenases ausB and ausC, and the dioxygenase ausE. Acid-catalyzed keto-rearrangement and ring contraction of the tetraketide portion of preaustinoid A3 by ausJ lead to the formation of preaustinoid A4. The aldo-keto reductase ausK, with the help of ausH, is involved in the next step by transforming preaustinoid A4 into isoaustinone which is in turn hydroxylated by the P450 monooxygenase ausI to form austinolide. The cytochrome P450 monooxygenase ausG modifies austinolide to austinol. Austinol is further acetylated to austin by the O-acetyltransferase ausP, which spontaneously changes to dehydroaustin. The cytochrome P450 monooxygenase ausR then converts dehydroaustin is into 7-dehydrodehydroaustin. The hydroxylation catalyzed by ausR permits the O-acetyltransferase ausQ to add an additional acetyl group to the molecule, leading to the formation of acetoxydehydroaustin. The short chain dehydrogenase ausT catalyzes the reduction of the double bond present between carbon atoms 1 and 2 to convert 7-dehydrodehydroaustin into 1,2-dihydro-7-hydroxydehydroaustin. AusQ catalyzes not only an acetylation reaction but also the addition of the PKS ausV diketide product to 1,2-dihydro-7-hydroxydehydroaustin, forming precalidodehydroaustin. Finally, the iron/alpha-ketoglutarate-dependent dioxygenase converts precalidodehydroaustin into calidodehydroaustin. This chain is Polyprenyl transferase ausN, found in Aspergillus calidoustus.